The following is a 338-amino-acid chain: L-lysine 2,3-aminomutase (338 aa).

The Radical SAM core domain occupies His-107–Glu-330. [4Fe-4S] cluster contacts are provided by Cys-121, Cys-125, and Cys-128. At Lys-333 the chain carries N6-(pyridoxal phosphate)lysine.

Belongs to the radical SAM superfamily. KamA family. The cofactor is [4Fe-4S] cluster. Requires pyridoxal 5'-phosphate as cofactor.

The catalysed reaction is L-lysine = D-beta-lysine. Functionally, with EpmA is involved in the beta-lysylation step of the post-translational modification of translation elongation factor P (EF-P) on 'Lys-34'. EpmB appears to act before EpmA. Displays lysine 2,3-aminomutase activity, producing (R)-beta-lysine from (S)-alpha-lysine (L-lysine). The protein is L-lysine 2,3-aminomutase (epmB) of Haemophilus influenzae (strain ATCC 51907 / DSM 11121 / KW20 / Rd).